Reading from the N-terminus, the 910-residue chain is Dimethylsulfide dehydrogenase subunit alpha (910 aa).

The tat-type signal signal peptide spans methionine 1 to alanine 28. Residues aspartate 59–aspartate 123 form the 4Fe-4S Mo/W bis-MGD-type domain. Residues histidine 66, cysteine 70, cysteine 74, and cysteine 109 each contribute to the [4Fe-4S] cluster site.

Belongs to the prokaryotic molybdopterin-containing oxidoreductase family. As to quaternary structure, heterotrimer of alpha, beta and gamma subunits. Requires [4Fe-4S] cluster as cofactor. It depends on Mo-bis(molybdopterin guanine dinucleotide) as a cofactor. Post-translationally, predicted to be exported by the Tat system. The position of the signal peptide cleavage has been experimentally proven.

Its subcellular location is the periplasm. It carries out the reaction 2 Fe(III)-[cytochrome c2] + dimethyl sulfide + H2O = 2 Fe(II)-[cytochrome c2] + dimethyl sulfoxide + 2 H(+). Allows photoautotrophic growth on dimethyl sulfide (DMS) as the sole electron donor. This Rhodovulum sulfidophilum (Rhodobacter sulfidophilus) protein is Dimethylsulfide dehydrogenase subunit alpha (ddhA).